Consider the following 534-residue polypeptide: CTP synthase (534 aa).

The segment at 1 to 267 (MTKYIFVTGG…DQIVCDHLKL (267 aa)) is amidoligase domain. S13 serves as a coordination point for CTP. S13 provides a ligand contact to UTP. An ATP-binding site is contributed by 14 to 19 (SIGKGI). Y54 is an L-glutamine binding site. D71 is a binding site for ATP. Residues D71 and E141 each contribute to the Mg(2+) site. Residues 148–150 (DIE), 188–193 (KTKPTQ), and K224 contribute to the CTP site. UTP is bound by residues 188-193 (KTKPTQ) and K224. An ATP-binding site is contributed by 240–242 (RDV). In terms of domain architecture, Glutamine amidotransferase type-1 spans 292 to 534 (KIALVGKYVE…FVTAAIKNSN (243 aa)). G354 contacts L-glutamine. C381 acts as the Nucleophile; for glutamine hydrolysis in catalysis. Residues 382-385 (LGMQ), E405, and R463 contribute to the L-glutamine site. Catalysis depends on residues H508 and E510.

It belongs to the CTP synthase family. In terms of assembly, homotetramer.

The enzyme catalyses UTP + L-glutamine + ATP + H2O = CTP + L-glutamate + ADP + phosphate + 2 H(+). The catalysed reaction is L-glutamine + H2O = L-glutamate + NH4(+). It catalyses the reaction UTP + NH4(+) + ATP = CTP + ADP + phosphate + 2 H(+). The protein operates within pyrimidine metabolism; CTP biosynthesis via de novo pathway; CTP from UDP: step 2/2. Allosterically activated by GTP, when glutamine is the substrate; GTP has no effect on the reaction when ammonia is the substrate. The allosteric effector GTP functions by stabilizing the protein conformation that binds the tetrahedral intermediate(s) formed during glutamine hydrolysis. Inhibited by the product CTP, via allosteric rather than competitive inhibition. Its function is as follows. Catalyzes the ATP-dependent amination of UTP to CTP with either L-glutamine or ammonia as the source of nitrogen. Regulates intracellular CTP levels through interactions with the four ribonucleotide triphosphates. This chain is CTP synthase, found in Streptococcus pyogenes serotype M4 (strain MGAS10750).